The sequence spans 454 residues: Transcription factor efuD (454 aa).

Residues 4-111 (AKELIRITAR…NYHRAIDSIK (108 aa)) form the HTH TFE/IIEalpha-type domain. The tract at residues 327–454 (LRTDDDGAMD…DEDELEFEDI (128 aa)) is disordered. Residues 353-372 (DQDEEEEEEDDDDDEFEDVD) show a composition bias toward acidic residues. Residues 387-401 (SVSTPATSAQVSSTA) are compositionally biased toward polar residues. A compositionally biased stretch (low complexity) spans 423-437 (APAAAASSQAAAAES). The span at 442-454 (SDEDEDELEFEDI) shows a compositional bias: acidic residues.

Belongs to the TFIIE alpha subunit family.

It is found in the nucleus. In terms of biological role, transcription factor; part of the gene cluster that mediates the biosynthesis of enfumafungin, a glycosylated fernene-type triterpenoid with potent antifungal activity, mediated by its interaction with beta-1,3-glucan synthase and the fungal cell wall. Is possibly responsible for the transcription regulation of one or more genes within the gene cluster. This Hormonema carpetanum protein is Transcription factor efuD.